Here is a 341-residue protein sequence, read N- to C-terminus: MITESRQMLDKRNRPLRDLRISVTDRCNFRCTYCMPAELFGPDYPFLKKEELLSFEELERLATLFVTRFGVEKIRLTGGEPLMRKDMPELIKKLARIPGIRDIAMTTNGSLLPVYAKRLKEAGLKRVTISLDSLEDERFKKINGRGVSVSKVLEGIEAAKQAGLGVKINMVVQKGVNEKDILPMARYFKEKGHILRFIEFMDVGNTNQWEKKDVMTKAEIIDLINKHMPVEPIAPNYIGEVASRFRYLDGSGEIGVISSVSDAFCGSCNRARLSARGELFTCLFASSGFDLRAPVRQELSDDELSEMIGTVWKNRIDQYSVDRTLSKASGKKKVEMSYIGG.

Residues 11 to 231 enclose the Radical SAM core domain; sequence KRNRPLRDLR…DLINKHMPVE (221 aa). Arg-20 serves as a coordination point for GTP. [4Fe-4S] cluster is bound by residues Cys-27 and Cys-31. Tyr-33 contacts S-adenosyl-L-methionine. A [4Fe-4S] cluster-binding site is contributed by Cys-34. Residue Arg-75 participates in GTP binding. Gly-79 contacts S-adenosyl-L-methionine. Thr-106 contributes to the GTP binding site. An S-adenosyl-L-methionine-binding site is contributed by Ser-130. Lys-167 is a GTP binding site. An S-adenosyl-L-methionine-binding site is contributed by Met-201. Cys-265 and Cys-268 together coordinate [4Fe-4S] cluster. Residue 270-272 coordinates GTP; the sequence is RAR. Residue Cys-282 coordinates [4Fe-4S] cluster.

The protein belongs to the radical SAM superfamily. MoaA family. As to quaternary structure, monomer and homodimer. [4Fe-4S] cluster serves as cofactor.

The catalysed reaction is GTP + AH2 + S-adenosyl-L-methionine = (8S)-3',8-cyclo-7,8-dihydroguanosine 5'-triphosphate + 5'-deoxyadenosine + L-methionine + A + H(+). Its pathway is cofactor biosynthesis; molybdopterin biosynthesis. Catalyzes the cyclization of GTP to (8S)-3',8-cyclo-7,8-dihydroguanosine 5'-triphosphate. Required for both nitrate assimilation and respiration. The polypeptide is GTP 3',8-cyclase (Bacillus subtilis (strain 168)).